Consider the following 941-residue polypeptide: Isoleucine--tRNA ligase (941 aa).

Positions 59-69 (PYANGNIHIGH) match the 'HIGH' region motif. Residue Glu562 coordinates L-isoleucyl-5'-AMP. The 'KMSKS' region signature appears at 603 to 607 (KMSKS). Lys606 is an ATP binding site. Residues Cys904, Cys907, Cys924, and Cys927 each coordinate Zn(2+).

This sequence belongs to the class-I aminoacyl-tRNA synthetase family. IleS type 1 subfamily. In terms of assembly, monomer. The cofactor is Zn(2+).

Its subcellular location is the cytoplasm. It carries out the reaction tRNA(Ile) + L-isoleucine + ATP = L-isoleucyl-tRNA(Ile) + AMP + diphosphate. Catalyzes the attachment of isoleucine to tRNA(Ile). As IleRS can inadvertently accommodate and process structurally similar amino acids such as valine, to avoid such errors it has two additional distinct tRNA(Ile)-dependent editing activities. One activity is designated as 'pretransfer' editing and involves the hydrolysis of activated Val-AMP. The other activity is designated 'posttransfer' editing and involves deacylation of mischarged Val-tRNA(Ile). The sequence is that of Isoleucine--tRNA ligase from Haemophilus influenzae (strain PittEE).